Consider the following 89-residue polypeptide: Sugar transporter SemiSWEET (89 aa).

A run of 3 helical transmembrane segments spans residues 4–27 (ILLT…IKTI), 35–55 (ISVV…AYGI), and 60–82 (FAVL…ITLI). The PQ-loop domain occupies 7–59 (TGLFAAFFTTFAFAPQSIKTIRTRNTEGISVVMYIMFLTGVISWIAYGIMRSD).

Homodimer.

The protein localises to the cell membrane. The homodimer mediates transmembrane sugar transport down a concentration gradient. Transport is probably effected by rocking-type movements, where a cargo-binding cavity opens first on one and then on the other side of the membrane. This chain is Sugar transporter SemiSWEET, found in Escherichia coli (strain UMEA 3162-1).